An 84-amino-acid polypeptide reads, in one-letter code: Small ribosomal subunit protein bS18 (84 aa).

The protein belongs to the bacterial ribosomal protein bS18 family. In terms of assembly, part of the 30S ribosomal subunit. Forms a tight heterodimer with protein bS6.

Binds as a heterodimer with protein bS6 to the central domain of the 16S rRNA, where it helps stabilize the platform of the 30S subunit. The protein is Small ribosomal subunit protein bS18 of Polynucleobacter necessarius subsp. necessarius (strain STIR1).